The sequence spans 621 residues: Hemolysin ahh1 (621 aa).

Positions M1–A30 are cleaved as a signal peptide. Residues R491–S610 form the Ricin B-type lectin domain.

It belongs to the HlyA hemolysin family.

Its function is as follows. Bacterial hemolysins are exotoxins that attack blood cell membranes and cause cell rupture by mechanisms not clearly defined. The protein is Hemolysin ahh1 (ahh1) of Aeromonas hydrophila subsp. hydrophila (strain ATCC 7966 / DSM 30187 / BCRC 13018 / CCUG 14551 / JCM 1027 / KCTC 2358 / NCIMB 9240 / NCTC 8049).